The chain runs to 516 residues: D-alanine--D-alanyl carrier protein ligase (516 aa).

156–157 (TS) contributes to the ATP binding site. Position 203 (Asp203) interacts with D-alanine. An ATP-binding site is contributed by 298 to 303 (NAYGPT). Residue Val307 coordinates D-alanine. Residues Asp389, 401–404 (YGGR), and Lys503 contribute to the ATP site. Lys503 serves as a coordination point for D-alanine.

It belongs to the ATP-dependent AMP-binding enzyme family. DltA subfamily.

The protein resides in the cytoplasm. It catalyses the reaction holo-[D-alanyl-carrier protein] + D-alanine + ATP = D-alanyl-[D-alanyl-carrier protein] + AMP + diphosphate. It functions in the pathway cell wall biogenesis; lipoteichoic acid biosynthesis. In terms of biological role, catalyzes the first step in the D-alanylation of lipoteichoic acid (LTA), the activation of D-alanine and its transfer onto the D-alanyl carrier protein (Dcp) DltC. In an ATP-dependent two-step reaction, forms a high energy D-alanyl-AMP intermediate, followed by transfer of the D-alanyl residue as a thiol ester to the phosphopantheinyl prosthetic group of the Dcp. D-alanylation of LTA plays an important role in modulating the properties of the cell wall in Gram-positive bacteria, influencing the net charge of the cell wall. The protein is D-alanine--D-alanyl carrier protein ligase of Streptococcus pneumoniae (strain 70585).